A 408-amino-acid polypeptide reads, in one-letter code: FAD-dependent monooxygenase nscC (408 aa).

The first 20 residues, 1–20, serve as a signal peptide directing secretion; the sequence is MAPPLPILIIGAGISGLTTA. FAD-binding residues include E34 and A45. 2 N-linked (GlcNAc...) asparagine glycosylation sites follow: N91 and N103. Residue R119 coordinates FAD. N170 and N231 each carry an N-linked (GlcNAc...) asparagine glycan. FAD is bound by residues D328 and G341.

Belongs to the paxM FAD-dependent monooxygenase family. FAD serves as cofactor.

The protein operates within secondary metabolite biosynthesis. In terms of biological role, FAD-dependent monooxygenase; part of the gene cluster that mediates the biosynthesis of neosartoricin, a prenylated anthracenone that exhibits T-cell antiproliferative activity, suggestive of a physiological role as an immunosuppressive agent. The non-reducing polyketide synthase nscA probably synthesizes and cyclizes the decaketide backbone. The hydrolase nscB then mediates the product release through hydrolysis followed by spontaneous decarboxylation. The prenyltransferase nscD catalyzes the addition of the dimethylallyl group to the aromatic C5. The FAD-dependent monooxygenase nscC is then responsible for the stereospecific hydroxylation at C2. There is no gene encoding O-acetyltransferase in the nsc gene cluster; thus, the last step of 2-O-acetylation leading to neosartoricin may be catalyzed by an unidentified O-acetyltransferase. This is FAD-dependent monooxygenase nscC from Neosartorya fischeri (strain ATCC 1020 / DSM 3700 / CBS 544.65 / FGSC A1164 / JCM 1740 / NRRL 181 / WB 181) (Aspergillus fischerianus).